Here is a 241-residue protein sequence, read N- to C-terminus: Uridylate kinase (241 aa).

12 to 15 (KLSG) contributes to the ATP binding site. The tract at residues 20-25 (GATGYG) is involved in allosteric activation by GTP. Residue glycine 54 participates in UMP binding. Residues glycine 55 and arginine 59 each coordinate ATP. UMP is bound by residues aspartate 74 and 135–142 (TGNPYMTT). ATP is bound by residues asparagine 163, tyrosine 169, and aspartate 172.

Belongs to the UMP kinase family. As to quaternary structure, homohexamer.

Its subcellular location is the cytoplasm. The catalysed reaction is UMP + ATP = UDP + ADP. It functions in the pathway pyrimidine metabolism; CTP biosynthesis via de novo pathway; UDP from UMP (UMPK route): step 1/1. Allosterically activated by GTP. Inhibited by UTP. Its function is as follows. Catalyzes the reversible phosphorylation of UMP to UDP. The protein is Uridylate kinase of Dehalococcoides mccartyi (strain CBDB1).